The primary structure comprises 516 residues: Arginyl-tRNA--protein transferase 1 (516 aa).

Basic and acidic residues predominate over residues 150-180; that stretch reads IESEEKEKEKSIKKEGSKEFIHPQSIEEKLG. Residues 150–206 form a disordered region; the sequence is IESEEKEKEKSIKKEGSKEFIHPQSIEEKLGSGEPSHPIKVHIGPKPGKGADLSKPP.

Belongs to the R-transferase family. As to quaternary structure, monomer. Interacts with LIAT1; LIAT1 is not a substrate of ATE1, the interaction takes place in the cytoplasm and seems to increase ATE1 arginyltransferase activity. Interacts with LIAT1; has a higher affinity than the other isoforms. Widely expressed.

It localises to the nucleus. The protein localises to the cytoplasm. It carries out the reaction an N-terminal L-alpha-aminoacyl-[protein] + L-arginyl-tRNA(Arg) = an N-terminal L-arginyl-L-aminoacyl-[protein] + tRNA(Arg) + H(+). Its function is as follows. Involved in the post-translational conjugation of arginine to the N-terminal aspartate or glutamate of a protein. This arginylation is required for degradation of the protein via the ubiquitin pathway. Does not arginylate cysteine residues. This chain is Arginyl-tRNA--protein transferase 1, found in Mus musculus (Mouse).